A 718-amino-acid chain; its full sequence is Phenylalanine--tRNA ligase beta subunit (718 aa).

Residues 39–153 (LNEISGIKFG…IFDLESNPLK (115 aa)) form the tRNA-binding domain. The B5 domain maps to 386–460 (SKKTFLDLNY…RFYGLEKLKD (75 aa)). 3 residues coordinate Mg(2+): Asp438, Asp444, and Asp448.

This sequence belongs to the phenylalanyl-tRNA synthetase beta subunit family. Type 1 subfamily. Tetramer of two alpha and two beta subunits. Mg(2+) is required as a cofactor.

Its subcellular location is the cytoplasm. It catalyses the reaction tRNA(Phe) + L-phenylalanine + ATP = L-phenylalanyl-tRNA(Phe) + AMP + diphosphate + H(+). The polypeptide is Phenylalanine--tRNA ligase beta subunit (Mesomycoplasma hyopneumoniae (strain J / ATCC 25934 / NCTC 10110) (Mycoplasma hyopneumoniae)).